Consider the following 397-residue polypeptide: Succinate--CoA ligase [ADP-forming] subunit beta (397 aa).

The region spanning 9–254 is the ATP-grasp domain; the sequence is KALLRSYGAP…ETEEDPKELA (246 aa). Residues lysine 46, 53 to 55, glutamate 109, serine 112, and glutamate 117 each bind ATP; that span reads GRG. Mg(2+) is bound by residues asparagine 209 and aspartate 223. Residues asparagine 274 and 331–333 contribute to the substrate site; that span reads GIM.

This sequence belongs to the succinate/malate CoA ligase beta subunit family. In terms of assembly, heterotetramer of two alpha and two beta subunits. The cofactor is Mg(2+).

It carries out the reaction succinate + ATP + CoA = succinyl-CoA + ADP + phosphate. The enzyme catalyses GTP + succinate + CoA = succinyl-CoA + GDP + phosphate. It participates in carbohydrate metabolism; tricarboxylic acid cycle; succinate from succinyl-CoA (ligase route): step 1/1. In terms of biological role, succinyl-CoA synthetase functions in the citric acid cycle (TCA), coupling the hydrolysis of succinyl-CoA to the synthesis of either ATP or GTP and thus represents the only step of substrate-level phosphorylation in the TCA. The beta subunit provides nucleotide specificity of the enzyme and binds the substrate succinate, while the binding sites for coenzyme A and phosphate are found in the alpha subunit. The protein is Succinate--CoA ligase [ADP-forming] subunit beta of Cereibacter sphaeroides (strain ATCC 17029 / ATH 2.4.9) (Rhodobacter sphaeroides).